A 228-amino-acid polypeptide reads, in one-letter code: Geranylgeranylglyceryl phosphate synthase (228 aa).

Sn-glycerol 1-phosphate is bound at residue lysine 13. 2 residues coordinate Mg(2+): aspartate 15 and threonine 41. Residues 159 to 164 (YIEYSG), glycine 189, and 209 to 210 (GN) each bind sn-glycerol 1-phosphate.

Belongs to the GGGP/HepGP synthase family. Group I subfamily. Mg(2+) serves as cofactor.

Its subcellular location is the cytoplasm. It catalyses the reaction sn-glycerol 1-phosphate + (2E,6E,10E)-geranylgeranyl diphosphate = sn-3-O-(geranylgeranyl)glycerol 1-phosphate + diphosphate. The protein operates within membrane lipid metabolism; glycerophospholipid metabolism. Functionally, prenyltransferase that catalyzes the transfer of the geranylgeranyl moiety of geranylgeranyl diphosphate (GGPP) to the C3 hydroxyl of sn-glycerol-1-phosphate (G1P). This reaction is the first ether-bond-formation step in the biosynthesis of archaeal membrane lipids. The protein is Geranylgeranylglyceryl phosphate synthase of Methanospirillum hungatei JF-1 (strain ATCC 27890 / DSM 864 / NBRC 100397 / JF-1).